We begin with the raw amino-acid sequence, 577 residues long: Pyruvate decarboxylase (577 aa).

Substrate is bound by residues D30 and H116. Residues 388-482 are thiamine pyrophosphate binding; sequence TPGYGVNDFI…FLINNDGYTI (95 aa). Positions 450, 477, and 479 each coordinate Mg(2+). E483 is a substrate binding site.

Belongs to the TPP enzyme family. Homotetramer. The cofactor is a metal cation. Thiamine diphosphate serves as cofactor.

The enzyme catalyses a 2-oxocarboxylate + H(+) = an aldehyde + CO2. The protein is Pyruvate decarboxylase (pdcA) of Aspergillus parasiticus.